We begin with the raw amino-acid sequence, 124 residues long: Small ribosomal subunit protein uS12 (124 aa).

At Asp89 the chain carries 3-methylthioaspartic acid. Residues 104-124 (ALGVEDRKRGRSKYGAKRPKA) form a disordered region. A compositionally biased stretch (basic residues) spans 112 to 124 (RGRSKYGAKRPKA).

Belongs to the universal ribosomal protein uS12 family. As to quaternary structure, part of the 30S ribosomal subunit. Contacts proteins S8 and S17. May interact with IF1 in the 30S initiation complex.

Its function is as follows. With S4 and S5 plays an important role in translational accuracy. Interacts with and stabilizes bases of the 16S rRNA that are involved in tRNA selection in the A site and with the mRNA backbone. Located at the interface of the 30S and 50S subunits, it traverses the body of the 30S subunit contacting proteins on the other side and probably holding the rRNA structure together. The combined cluster of proteins S8, S12 and S17 appears to hold together the shoulder and platform of the 30S subunit. The sequence is that of Small ribosomal subunit protein uS12 from Treponema denticola (strain ATCC 35405 / DSM 14222 / CIP 103919 / JCM 8153 / KCTC 15104).